A 148-amino-acid chain; its full sequence is Ubiquitin-like protein 4A (148 aa).

The Ubiquitin-like domain maps to 1–76 (MQLTVKALKG…LNLMVKDQVA (76 aa)).

As to quaternary structure, component of the bag6/bat3 complex.

The protein resides in the cytoplasm. It localises to the cytosol. Its subcellular location is the nucleus. In terms of biological role, as part of a cytosolic protein quality control complex, the bag6/bat3 complex, maintains misfolded and hydrophobic patches-containing proteins in a soluble state and participates in their proper delivery to the endoplasmic reticulum or alternatively can promote their sorting to the proteasome where they undergo degradation. The bag6/bat3 complex is involved in the post-translational delivery of tail-anchored/type II transmembrane proteins to the endoplasmic reticulum membrane. Similarly, the bag6/bat3 complex also functions as a sorting platform for proteins of the secretory pathway that are mislocalized to the cytosol either delivering them to the proteasome for degradation or to the endoplasmic reticulum. The bag6/bat3 complex also plays a role in the endoplasmic reticulum-associated degradation (ERAD), a quality control mechanism that eliminates unwanted proteins of the endoplasmic reticulum through their retrotranslocation to the cytosol and their targeting to the proteasome. It maintains these retrotranslocated proteins in an unfolded yet soluble state condition in the cytosol to ensure their proper delivery to the proteasome. This chain is Ubiquitin-like protein 4A (ubl4a), found in Xenopus laevis (African clawed frog).